A 453-amino-acid chain; its full sequence is Chromosomal replication initiator protein DnaA (453 aa).

The tract at residues 1–78 is domain I, interacts with DnaA modulators; it reads MTENEQLFWN…FEIFNAEITA (78 aa). The domain II stretch occupies residues 78 to 112; the sequence is ANYVSNDLHLQETSFSNYQQSSNEVNTLPIRKIDS. The tract at residues 113–331 is domain III, AAA+ region; the sequence is NLKEKYTFAN…GALKNISLVA (219 aa). Gly-157, Gly-159, Lys-160, and Thr-161 together coordinate ATP. The tract at residues 332 to 453 is domain IV, binds dsDNA; it reads DFKHAKTITV…EIETIKNKIR (122 aa).

This sequence belongs to the DnaA family. As to quaternary structure, oligomerizes as a right-handed, spiral filament on DNA at oriC.

The protein resides in the cytoplasm. Functionally, plays an essential role in the initiation and regulation of chromosomal replication. ATP-DnaA binds to the origin of replication (oriC) to initiate formation of the DNA replication initiation complex once per cell cycle. Binds the DnaA box (a 9 base pair repeat at the origin) and separates the double-stranded (ds)DNA. Forms a right-handed helical filament on oriC DNA; dsDNA binds to the exterior of the filament while single-stranded (ss)DNA is stabiized in the filament's interior. The ATP-DnaA-oriC complex binds and stabilizes one strand of the AT-rich DNA unwinding element (DUE), permitting loading of DNA polymerase. After initiation quickly degrades to an ADP-DnaA complex that is not apt for DNA replication. Binds acidic phospholipids. The polypeptide is Chromosomal replication initiator protein DnaA (Streptococcus agalactiae serotype Ia (strain ATCC 27591 / A909 / CDC SS700)).